A 356-amino-acid polypeptide reads, in one-letter code: Peptide methionine sulfoxide reductase MsrA/MsrB (356 aa).

The segment at His46–Glu199 is peptide methionine sulfoxide reductase A. Cys54 is a catalytic residue. In terms of domain architecture, MsrB spans Asp216–Leu339. Cys328 (nucleophile) is an active-site residue.

The protein in the N-terminal section; belongs to the MsrA Met sulfoxide reductase family. This sequence in the C-terminal section; belongs to the MsrB Met sulfoxide reductase family.

The catalysed reaction is L-methionyl-[protein] + [thioredoxin]-disulfide + H2O = L-methionyl-(S)-S-oxide-[protein] + [thioredoxin]-dithiol. It carries out the reaction [thioredoxin]-disulfide + L-methionine + H2O = L-methionine (S)-S-oxide + [thioredoxin]-dithiol. The enzyme catalyses L-methionyl-[protein] + [thioredoxin]-disulfide + H2O = L-methionyl-(R)-S-oxide-[protein] + [thioredoxin]-dithiol. Its function is as follows. Has an important function as a repair enzyme for proteins that have been inactivated by oxidation. Catalyzes the reversible oxidation-reduction of methionine sulfoxide in proteins to methionine. This Aggregatibacter actinomycetemcomitans (Actinobacillus actinomycetemcomitans) protein is Peptide methionine sulfoxide reductase MsrA/MsrB (msrAB).